The sequence spans 86 residues: MRHYDCKNYINLDCEKGLCALTKGMVPIDGEGSEACPNFKPAEKCGNCKNFCNPDKYGLGTCTGLEKENWAYATCGASACPSYKAE.

[4Fe-4S] cluster contacts are provided by histidine 3, cysteine 6, cysteine 19, cysteine 36, cysteine 45, cysteine 48, cysteine 62, and cysteine 80.

This sequence belongs to the HPA decarboxylase small subunit family. Heterooctamer consisting of 4 large (HpdB) subunits and 4 small (HpdC) subunits, arranged as a tetramer of heterodimers. [4Fe-4S] cluster is required as a cofactor.

The enzyme catalyses 4-hydroxyphenylacetate + H(+) = 4-methylphenol + CO2. The catalysed reaction is 3,4-dihydroxyphenylacetate + H(+) = 4-methylcatechol + CO2. Functionally, component of the HPA decarboxylase that decarboxylates phenylacetates with a hydroxyl group in the p-position. Active toward 4-hydroxyphenylacetate and 3,4-dihydroxyphenylacetate, forming 4-methylphenol and 4-methylcatechol, respectively. Is likely involved in the catabolism of aromatic amino acids such as tyrosine fermentation. 4-methylphenol (p-cresol) formation provides metabolic toxicity, which allows an active suppression of other microbes and may provide growth advantages for the producers in highly competitive environments. The small subunit is essential for enzymatic activity of HPA decarboxylase, and also seems to be involved in the regulation of the enzyme oligomeric state and catalytic activity. The protein is 4-hydroxyphenylacetate decarboxylase small subunit of Clostridium scatologenes.